The primary structure comprises 144 residues: Cytochrome c oxidase subunit 4 isoform 1, mitochondrial (144 aa).

Residues 1 to 73 (SVVKSEDFSL…SFAEMNRGSN (73 aa)) are Mitochondrial matrix-facing. Position 4 is an N6-acetyllysine; alternate (Lys-4). The residue at position 4 (Lys-4) is an N6-succinyllysine; alternate. Lys-28 carries the N6-acetyllysine modification. A phosphoserine mark is found at Ser-31 and Ser-33. The residue at position 35 (Lys-35) is an N6-acetyllysine; alternate. At Lys-35 the chain carries N6-succinyllysine; alternate. Lys-42 bears the N6-acetyllysine mark. A helical transmembrane segment spans residues 74-99 (EWKTVVGGAMFFIGFTALVIMWQKHY). Over 100 to 144 (VYGPLPQSFDKEWVAKQTKRMLDMKVNPIQGLASKWDYEKNEWKK) the chain is Mitochondrial intermembrane.

The protein belongs to the cytochrome c oxidase IV family. In terms of assembly, component of the cytochrome c oxidase (complex IV, CIV), a multisubunit enzyme composed of 14 subunits. The complex is composed of a catalytic core of 3 subunits MT-CO1, MT-CO2 and MT-CO3, encoded in the mitochondrial DNA, and 11 supernumerary subunits COX4I, COX5A, COX5B, COX6A, COX6B, COX6C, COX7A, COX7B, COX7C, COX8 and NDUFA4, which are encoded in the nuclear genome. The complex exists as a monomer or a dimer and forms supercomplexes (SCs) in the inner mitochondrial membrane with NADH-ubiquinone oxidoreductase (complex I, CI) and ubiquinol-cytochrome c oxidoreductase (cytochrome b-c1 complex, complex III, CIII), resulting in different assemblies (supercomplex SCI(1)III(2)IV(1) and megacomplex MCI(2)III(2)IV(2)). Interacts with PHB2; the interaction decreases in absence of SPHK2. Interacts with AFG1L. Interacts with ABCB7; this interaction allows the regulation of cellular iron homeostasis and cellular reactive oxygen species (ROS) levels in cardiomyocytes. Interacts with FLVCR2; this interaction occurs in the absence of heme and is disrupted upon heme binding. Interacts with IRGC.

It is found in the mitochondrion inner membrane. The protein operates within energy metabolism; oxidative phosphorylation. Its function is as follows. Component of the cytochrome c oxidase, the last enzyme in the mitochondrial electron transport chain which drives oxidative phosphorylation. The respiratory chain contains 3 multisubunit complexes succinate dehydrogenase (complex II, CII), ubiquinol-cytochrome c oxidoreductase (cytochrome b-c1 complex, complex III, CIII) and cytochrome c oxidase (complex IV, CIV), that cooperate to transfer electrons derived from NADH and succinate to molecular oxygen, creating an electrochemical gradient over the inner membrane that drives transmembrane transport and the ATP synthase. Cytochrome c oxidase is the component of the respiratory chain that catalyzes the reduction of oxygen to water. Electrons originating from reduced cytochrome c in the intermembrane space (IMS) are transferred via the dinuclear copper A center (CU(A)) of subunit 2 and heme A of subunit 1 to the active site in subunit 1, a binuclear center (BNC) formed by heme A3 and copper B (CU(B)). The BNC reduces molecular oxygen to 2 water molecules using 4 electrons from cytochrome c in the IMS and 4 protons from the mitochondrial matrix. This chain is Cytochrome c oxidase subunit 4 isoform 1, mitochondrial (COX4I1), found in Pan troglodytes (Chimpanzee).